Here is a 188-residue protein sequence, read N- to C-terminus: UPF0340 protein GK3370 (188 aa).

Belongs to the UPF0340 family.

The chain is UPF0340 protein GK3370 from Geobacillus kaustophilus (strain HTA426).